A 631-amino-acid chain; its full sequence is MDYPDRFDVIVIGGGHAGTEAALAAARMGCQTLLLTHNIETLGQMSCNPAIGGIGKSHLVKEIDALGGAMAHATDLGGIQFRVLNARKGPAVRATRAQADRVRYKAAIRGMLENQPNLTLFQQAADDLIVENDTVRGVVTQTGIRVFGESVVLCTGTFLGGVIHIGLDHHAGGRAGDPPSNALAQRLRALPFHVDRLKTGTPPRLDAKSVDFSVLETQPGDDPTPVMSYLGRRDQHPRQVACHIAHTNARTHEIIHANLDRSPMYSGVIGGVGPRYCPSIEDKVNRFADKSSHQIFVEPEGLDTHELYPNGISTSLPFDVQFEVVRSIKGFENAHITRPGYAIEYDFFDPRDLKHSLETKFIHNLFFAGQINGTTGYEEAAAQGLLAGLNAARRAQGQDAWSPRRDEAYLGVLVDDLITMGTQEPYRMFTSRAEHRLLLREDNADLRLTEIGRELGLVDDTRWAHFSTKREAIARETERLRETWVQPSSELAKRLSGKLDKPLAREYRLADLLKRPELNHADLADDAPELDPAVAEQVQIQAKYQGYIARQQDEIDRLRRHEALRLPEDLDYARIDGLSHEIRQKLEAARPETLAQAGRISGVTPAAVSLLLVHLKKRRLIEDQDVQAVNA.

Residue 13–18 (GGGHAG) participates in FAD binding. Position 273 to 287 (273 to 287 (GPRYCPSIEDKVNRF)) interacts with NAD(+).

Belongs to the MnmG family. As to quaternary structure, homodimer. Heterotetramer of two MnmE and two MnmG subunits. FAD is required as a cofactor.

The protein localises to the cytoplasm. Functionally, NAD-binding protein involved in the addition of a carboxymethylaminomethyl (cmnm) group at the wobble position (U34) of certain tRNAs, forming tRNA-cmnm(5)s(2)U34. This chain is tRNA uridine 5-carboxymethylaminomethyl modification enzyme MnmG, found in Chromohalobacter salexigens (strain ATCC BAA-138 / DSM 3043 / CIP 106854 / NCIMB 13768 / 1H11).